Consider the following 880-residue polypeptide: MSTVEPNVYDPQQVETSAQQFWDATRAFQVDENSEKPKFYCLSMLPYPSGALHMGHVRNYTISDVVSRYKRMTGHNVLQPMGWDAFGLPAENAAIKNKTAPAKWTYANIEHMRAQLKSLGYAIDWSREFATCTPDYYVHEQRMFTRLMRKGLAYRRNAVVNWDPIDQTVLANEQVIDGRGWRSGAVVEKREIPQWFLRITDYAQELLDGLDQLDGWPDSVKTMQRNWIGRSEGLEIQFDVRDPDGATLDPLRVFTTRPDTLMGVTFVSIAAEHPLALHAAKSNPELAALLETLKHGGVSEAELETQEKRGMATGLTAVHPISGEQVPVWVANFVLMGYGTGAVMAVPGHDQRDFEFANKYGLPIVQVVKLREPRNEEEQTWDATHWRDWYTDKSRELELINSAEFDGLDFGGAFEALAERFERKGQGQRRVNYRLRDWGVSRQRYWGCPIPVIYCAKCGAVPVPEDQLPVVLPENVEFSGTGSPIKTDPTWRQTTCPDCGGPAERETDTFDTFMESSWYVARYTSPKARDMVDRRANYWMPADLYVGGIEHAILHLMYFRFYHKLMRDARLVDSDEPVTNLLTQGMVIADTFYRDADNGGKDWINPADVEIQRDERGRVTGAVLIADGQPVQIGGTEKMSKSKNNGVDPQSMVAKYGADTVRLFSMFAAPPEQSLEWNEAGVDGMARFMRRLWAQVHKHVGEGTAVALDVAALSAEQKAIRRKTHETIGKVGDDYGRRHSFNTAIAAVMELSNALAKFDDASEQGRAVRQEALEAMVLLLNPITPHASHALWQVLGRGETLLENVAFPQADASALVRDALTLAVQINGKLRGTIDVAADATREQIEALAQAEPNAAKFLEGLSVRKIIIVPGKIVNIVAG.

The 'HIGH' region signature appears at 46–56; sequence PYPSGALHMGH. The 'KMSKS' region motif lies at 638–642; sequence KMSKS. Residue lysine 641 participates in ATP binding.

Belongs to the class-I aminoacyl-tRNA synthetase family.

The protein resides in the cytoplasm. The catalysed reaction is tRNA(Leu) + L-leucine + ATP = L-leucyl-tRNA(Leu) + AMP + diphosphate. This is Leucine--tRNA ligase from Xanthomonas axonopodis pv. citri (strain 306).